We begin with the raw amino-acid sequence, 148 residues long: Large ribosomal subunit protein uL15 (148 aa).

Positions 1 to 10 (MQLHNLEYKK) are enriched in basic and acidic residues. The segment at 1-42 (MQLHNLEYKKGSRNHKEKRVGRGHGSGLGKTSGRGQDGQKAR) is disordered. Basic residues predominate over residues 11–22 (GSRNHKEKRVGR). The segment covering 23 to 36 (GHGSGLGKTSGRGQ) has biased composition (gly residues).

The protein belongs to the universal ribosomal protein uL15 family. In terms of assembly, part of the 50S ribosomal subunit.

Its function is as follows. Binds to the 23S rRNA. This chain is Large ribosomal subunit protein uL15, found in Ureaplasma urealyticum serovar 10 (strain ATCC 33699 / Western).